The chain runs to 103 residues: 6-pyruvoyl tetrahydrobiopterin synthase (103 aa).

Residue A1 is modified to N-acetylalanine. Position 27 (H27) interacts with Zn(2+). Active-site charge relay system residues include H53 and E92.

It belongs to the PTPS family. In terms of assembly, homohexamer formed of two homotrimers in a head to head fashion. It depends on Zn(2+) as a cofactor.

It carries out the reaction 7,8-dihydroneopterin 3'-triphosphate = 6-pyruvoyl-5,6,7,8-tetrahydropterin + triphosphate + H(+). It participates in cofactor biosynthesis; tetrahydrobiopterin biosynthesis; tetrahydrobiopterin from 7,8-dihydroneopterin triphosphate: step 1/3. Involved in the biosynthesis of tetrahydrobiopterin, an essential cofactor of aromatic amino acid hydroxylases. Catalyzes the transformation of 7,8-dihydroneopterin triphosphate into 6-pyruvoyl tetrahydropterin. The chain is 6-pyruvoyl tetrahydrobiopterin synthase (pts) from Salmo salar (Atlantic salmon).